Here is a 639-residue protein sequence, read N- to C-terminus: Chaperone protein DnaK (639 aa).

Thr198 bears the Phosphothreonine; by autocatalysis mark. The span at 603-618 (AKAQTQGGAQEGAAKQ) shows a compositional bias: low complexity. The segment at 603–639 (AKAQTQGGAQEGAAKQSNATADDVVDAEFEEVKDDKK) is disordered. A compositionally biased stretch (acidic residues) spans 625–639 (DVVDAEFEEVKDDKK).

Belongs to the heat shock protein 70 family.

In terms of biological role, acts as a chaperone. The chain is Chaperone protein DnaK from Shewanella sp. (strain ANA-3).